A 389-amino-acid chain; its full sequence is Protein P4 (389 aa).

The chain is Protein P4 from Rice tungro bacilliform virus (isolate Philippines) (RTBV).